The chain runs to 183 residues: Ribosome-recycling factor (183 aa).

This sequence belongs to the RRF family.

Its subcellular location is the cytoplasm. Its function is as follows. Responsible for the release of ribosomes from messenger RNA at the termination of protein biosynthesis. May increase the efficiency of translation by recycling ribosomes from one round of translation to another. This chain is Ribosome-recycling factor, found in Treponema pallidum (strain Nichols).